We begin with the raw amino-acid sequence, 155 residues long: Protein E6 (155 aa).

Zinc fingers lie at residues cysteine 33–cysteine 69 and cysteine 106–cysteine 142.

This sequence belongs to the papillomaviridae E6 protein family. Forms homodimers. Interacts with ubiquitin-protein ligase UBE3A/E6-AP; this interaction stimulates UBE3A ubiquitin activity. Interacts with host TP53 and EP300; this interaction inhibits TP53 activity.

Its subcellular location is the host cytoplasm. It is found in the host nucleus. Its function is as follows. Plays a major role in the induction and maintenance of cellular transformation. E6 associates with host UBE3A/E6-AP ubiquitin-protein ligase and modulates its activity. Sequesters tumor suppressor TP53 in the host cytoplasm and modulates its activity by interacting with host EP300 that results in the reduction of TP53 acetylation and activation. In turn, apoptosis induced by DNA damage is inhibited. E6 also protects host keratinocytes from apoptosis by mediating the degradation of host BAK1. May also inhibit host immune response. The chain is Protein E6 from Homo sapiens (Human).